The sequence spans 99 residues: Large ribosomal subunit protein uL23 (99 aa).

The protein belongs to the universal ribosomal protein uL23 family. In terms of assembly, part of the 50S ribosomal subunit. Contacts protein L29, and trigger factor when it is bound to the ribosome.

Its function is as follows. One of the early assembly proteins it binds 23S rRNA. One of the proteins that surrounds the polypeptide exit tunnel on the outside of the ribosome. Forms the main docking site for trigger factor binding to the ribosome. The polypeptide is Large ribosomal subunit protein uL23 (Blochmanniella floridana).